The chain runs to 145 residues: Large ribosomal subunit protein uL13 (145 aa).

This sequence belongs to the universal ribosomal protein uL13 family. Part of the 50S ribosomal subunit.

Functionally, this protein is one of the early assembly proteins of the 50S ribosomal subunit, although it is not seen to bind rRNA by itself. It is important during the early stages of 50S assembly. The sequence is that of Large ribosomal subunit protein uL13 from Staphylococcus saprophyticus subsp. saprophyticus (strain ATCC 15305 / DSM 20229 / NCIMB 8711 / NCTC 7292 / S-41).